The sequence spans 198 residues: Protein GrpE (198 aa).

It belongs to the GrpE family. Homodimer.

Its subcellular location is the cytoplasm. Participates actively in the response to hyperosmotic and heat shock by preventing the aggregation of stress-denatured proteins, in association with DnaK and GrpE. It is the nucleotide exchange factor for DnaK and may function as a thermosensor. Unfolded proteins bind initially to DnaJ; upon interaction with the DnaJ-bound protein, DnaK hydrolyzes its bound ATP, resulting in the formation of a stable complex. GrpE releases ADP from DnaK; ATP binding to DnaK triggers the release of the substrate protein, thus completing the reaction cycle. Several rounds of ATP-dependent interactions between DnaJ, DnaK and GrpE are required for fully efficient folding. This chain is Protein GrpE, found in Actinobacillus pleuropneumoniae serotype 7 (strain AP76).